We begin with the raw amino-acid sequence, 202 residues long: Small ribosomal subunit protein uS4 (202 aa).

Residues 16 to 42 (GELPGLSRKNPRRAYPPGQHGQARKKR) are disordered. In terms of domain architecture, S4 RNA-binding spans 90-151 (MRLDNTVFRL…QERSRRLVEA (62 aa)).

It belongs to the universal ribosomal protein uS4 family. Part of the 30S ribosomal subunit. Contacts protein S5. The interaction surface between S4 and S5 is involved in control of translational fidelity.

Its function is as follows. One of the primary rRNA binding proteins, it binds directly to 16S rRNA where it nucleates assembly of the body of the 30S subunit. Functionally, with S5 and S12 plays an important role in translational accuracy. The protein is Small ribosomal subunit protein uS4 of Rippkaea orientalis (strain PCC 8801 / RF-1) (Cyanothece sp. (strain PCC 8801)).